The chain runs to 195 residues: SAGA-associated factor 11 homolog (195 aa).

The interval 1–22 (MSAANMPTTTGAQGSGNQVPRT) is disordered. The segment at 105-126 (CTCPNCDRLVAAARFAPHLEKC) adopts an SGF11-type zinc-finger fold. The disordered stretch occupies residues 140–195 (RLATKEGATSAHLHSSGNTGGTDDEDDVDWSSDKRRKKSNQNSRNNGSKKNNGKTF). Ser171 carries the phosphoserine modification. Residues 179–195 (NQNSRNNGSKKNNGKTF) are compositionally biased toward low complexity.

Belongs to the SGF11 family. As to quaternary structure, component of some SAGA transcription coactivator-HAT complexes, at least composed of Ada2b, not/nonstop, Pcaf/Gcn5, Sgf11 and Spt3. Within the SAGA complex, Sgf11, e(y)2, and not/nonstop form an additional subcomplex of SAGA called the DUB module (deubiquitination module). Interacts directly with not/nonstop. Interacts with the AMEX complex component xmas-2. Interacts with Cbp80; important for promoter recruitment of Sgf11 that is not associated with the DUB module.

The protein localises to the nucleus. It is found in the nucleoplasm. It localises to the cytoplasm. Component of the transcription regulatory histone acetylation (HAT) complex SAGA, a multiprotein complex that activates transcription by remodeling chromatin and mediating histone acetylation and deubiquitination. Within the SAGA complex, participates in a subcomplex that specifically deubiquitinates histone H2B. The SAGA complex is recruited to specific gene promoters by activators, where it is required for transcription. Required for nuclear receptor-mediated transactivation. Binds independently on SAGA to promoters in an RNA-dependent manner. Binds to mRNA and is essential for total mRNA export from the nucleus. Required to counteract heterochromatin silencing. Controls the development of neuronal connectivity in visual system by being required for accurate axon targeting in the optic lobe. Required for expression of ecdysone-induced genes such as br/broad. In Drosophila sechellia (Fruit fly), this protein is SAGA-associated factor 11 homolog.